We begin with the raw amino-acid sequence, 575 residues long: Probable cytochrome P450 514A1 (575 aa).

The helical transmembrane segment at I4–L24 threads the bilayer. Residue C448 participates in heme binding.

This sequence belongs to the cytochrome P450 family. The cofactor is heme.

It localises to the membrane. In Dictyostelium discoideum (Social amoeba), this protein is Probable cytochrome P450 514A1 (cyp514A1).